The sequence spans 216 residues: Large ribosomal subunit protein uL24m (216 aa).

The transit peptide at 1–9 (MRLTALLSM) directs the protein to the mitochondrion. Residues 56–89 (VVRGDTVEVLSGKEKGKQGKVAQVIRARNWVILE) enclose the KOW domain. A disordered region spans residues 167–186 (PQQWKDGPKDTSPEDTLQKT).

It belongs to the universal ribosomal protein uL24 family. Component of the mitochondrial ribosome large subunit (39S) which comprises a 16S rRNA and about 50 distinct proteins.

The protein localises to the mitochondrion. This Danio rerio (Zebrafish) protein is Large ribosomal subunit protein uL24m (mrpl24).